A 185-amino-acid polypeptide reads, in one-letter code: Elongation factor P (185 aa).

It belongs to the elongation factor P family.

The protein localises to the cytoplasm. Its pathway is protein biosynthesis; polypeptide chain elongation. In terms of biological role, involved in peptide bond synthesis. Stimulates efficient translation and peptide-bond synthesis on native or reconstituted 70S ribosomes in vitro. Probably functions indirectly by altering the affinity of the ribosome for aminoacyl-tRNA, thus increasing their reactivity as acceptors for peptidyl transferase. The protein is Elongation factor P of Alkaliphilus oremlandii (strain OhILAs) (Clostridium oremlandii (strain OhILAs)).